We begin with the raw amino-acid sequence, 157 residues long: Endoribonuclease YbeY (157 aa).

Positions 113, 117, and 123 each coordinate Zn(2+).

This sequence belongs to the endoribonuclease YbeY family. Requires Zn(2+) as cofactor.

It localises to the cytoplasm. Its function is as follows. Single strand-specific metallo-endoribonuclease involved in late-stage 70S ribosome quality control and in maturation of the 3' terminus of the 16S rRNA. This is Endoribonuclease YbeY from Ehrlichia ruminantium (strain Gardel).